We begin with the raw amino-acid sequence, 485 residues long: Ribosomal protein uS12 methylthiotransferase RimO (485 aa).

Positions 37–147 constitute an MTTase N-terminal domain; it reads SRIGFVSLGC…VVEQVHEHLP (111 aa). The [4Fe-4S] cluster site is built by Cys-46, Cys-82, Cys-111, Cys-179, Cys-183, and Cys-186. Residues 165–402 enclose the Radical SAM core domain; the sequence is LTPRHYAYLK…MEVQGEISAA (238 aa). Residues 405–471 form the TRAM domain; sequence KARIGNEYQV…EHDVWAVLSE (67 aa).

This sequence belongs to the methylthiotransferase family. RimO subfamily. [4Fe-4S] cluster serves as cofactor.

It localises to the cytoplasm. It catalyses the reaction L-aspartate(89)-[ribosomal protein uS12]-hydrogen + (sulfur carrier)-SH + AH2 + 2 S-adenosyl-L-methionine = 3-methylsulfanyl-L-aspartate(89)-[ribosomal protein uS12]-hydrogen + (sulfur carrier)-H + 5'-deoxyadenosine + L-methionine + A + S-adenosyl-L-homocysteine + 2 H(+). In terms of biological role, catalyzes the methylthiolation of an aspartic acid residue of ribosomal protein uS12. The sequence is that of Ribosomal protein uS12 methylthiotransferase RimO from Alteromonas mediterranea (strain DSM 17117 / CIP 110805 / LMG 28347 / Deep ecotype).